A 383-amino-acid chain; its full sequence is Putative glutamate--cysteine ligase 2 (383 aa).

The protein belongs to the glutamate--cysteine ligase type 2 family. YbdK subfamily.

The catalysed reaction is L-cysteine + L-glutamate + ATP = gamma-L-glutamyl-L-cysteine + ADP + phosphate + H(+). In terms of biological role, ATP-dependent carboxylate-amine ligase which exhibits weak glutamate--cysteine ligase activity. The chain is Putative glutamate--cysteine ligase 2 from Legionella pneumophila subsp. pneumophila (strain Philadelphia 1 / ATCC 33152 / DSM 7513).